The chain runs to 334 residues: UDP-N-acetylglucosamine--N-acetylmuramyl-(pentapeptide) pyrophosphoryl-undecaprenol N-acetylglucosamine transferase (334 aa).

Residues 11–13 (TGG), Asn-125, Ser-185, Ile-229, and Gln-274 contribute to the UDP-N-acetyl-alpha-D-glucosamine site.

Belongs to the glycosyltransferase 28 family. MurG subfamily.

The protein localises to the cell inner membrane. The enzyme catalyses di-trans,octa-cis-undecaprenyl diphospho-N-acetyl-alpha-D-muramoyl-L-alanyl-D-glutamyl-meso-2,6-diaminopimeloyl-D-alanyl-D-alanine + UDP-N-acetyl-alpha-D-glucosamine = di-trans,octa-cis-undecaprenyl diphospho-[N-acetyl-alpha-D-glucosaminyl-(1-&gt;4)]-N-acetyl-alpha-D-muramoyl-L-alanyl-D-glutamyl-meso-2,6-diaminopimeloyl-D-alanyl-D-alanine + UDP + H(+). It participates in cell wall biogenesis; peptidoglycan biosynthesis. In terms of biological role, cell wall formation. Catalyzes the transfer of a GlcNAc subunit on undecaprenyl-pyrophosphoryl-MurNAc-pentapeptide (lipid intermediate I) to form undecaprenyl-pyrophosphoryl-MurNAc-(pentapeptide)GlcNAc (lipid intermediate II). This Thermosipho melanesiensis (strain DSM 12029 / CIP 104789 / BI429) protein is UDP-N-acetylglucosamine--N-acetylmuramyl-(pentapeptide) pyrophosphoryl-undecaprenol N-acetylglucosamine transferase.